A 78-amino-acid chain; its full sequence is WAP four-disulfide core domain protein 12 (78 aa).

The first 21 residues, 1 to 21 (MWPNSILVLTVLLISSTLVTG), serve as a signal peptide directing secretion. The WAP domain maps to 25–72 (KGAEKGVCPPDNVRCIRGEDPQCHNDNDCKDQKICCYWHCGFKCVQPV). 4 disulfide bridges follow: C32–C60, C39–C64, C47–C59, and C53–C68.

The protein localises to the secreted. Its function is as follows. Antibacterial protein. Putative acid-stable proteinase inhibitor. This Rattus norvegicus (Rat) protein is WAP four-disulfide core domain protein 12.